Here is a 433-residue protein sequence, read N- to C-terminus: Probable non-inhibitory serpin-Z5 (433 aa).

A compositionally biased stretch (basic and acidic residues) spans 1–12 (MEPKEKKQKLDT). The disordered stretch occupies residues 1 to 43 (MEPKEKKQKLDTSEVASPSLSKTHLKKKKTKKQKIRKSQEITS). Over residues 23–36 (THLKKKKTKKQKIR) the composition is skewed to basic residues. The segment at 380-404 (GTEAVTFTAFRSAYLGCALVKPIDF) is RCL.

This sequence belongs to the serpin family. As to expression, weakly expressed during seedling development.

This Arabidopsis thaliana (Mouse-ear cress) protein is Probable non-inhibitory serpin-Z5.